The following is a 429-amino-acid chain: Serine--tRNA ligase (429 aa).

An L-serine-binding site is contributed by 236–238; it reads TAE. Position 267 to 269 (267 to 269) interacts with ATP; sequence RSE. Glu290 is an L-serine binding site. Position 354-357 (354-357) interacts with ATP; it reads EVSS. Residue Ser390 participates in L-serine binding.

The protein belongs to the class-II aminoacyl-tRNA synthetase family. Type-1 seryl-tRNA synthetase subfamily. In terms of assembly, homodimer. The tRNA molecule binds across the dimer.

It localises to the cytoplasm. The enzyme catalyses tRNA(Ser) + L-serine + ATP = L-seryl-tRNA(Ser) + AMP + diphosphate + H(+). It catalyses the reaction tRNA(Sec) + L-serine + ATP = L-seryl-tRNA(Sec) + AMP + diphosphate + H(+). It functions in the pathway aminoacyl-tRNA biosynthesis; selenocysteinyl-tRNA(Sec) biosynthesis; L-seryl-tRNA(Sec) from L-serine and tRNA(Sec): step 1/1. Functionally, catalyzes the attachment of serine to tRNA(Ser). Is also able to aminoacylate tRNA(Sec) with serine, to form the misacylated tRNA L-seryl-tRNA(Sec), which will be further converted into selenocysteinyl-tRNA(Sec). In Wigglesworthia glossinidia brevipalpis, this protein is Serine--tRNA ligase.